Here is a 753-residue protein sequence, read N- to C-terminus: 5-methyltetrahydropteroyltriglutamate--homocysteine methyltransferase (753 aa).

5-methyltetrahydropteroyltri-L-glutamate is bound by residues 17–20 and Lys-117; that span reads RELK. Residues 431 to 433 and Glu-484 each bind L-homocysteine; that span reads IGS. L-methionine is bound by residues 431–433 and Glu-484; that span reads IGS. 5-methyltetrahydropteroyltri-L-glutamate is bound by residues 515–516 and Trp-561; that span reads RC. Position 599 (Asp-599) interacts with L-homocysteine. Residue Asp-599 coordinates L-methionine. Glu-605 provides a ligand contact to 5-methyltetrahydropteroyltri-L-glutamate. His-641, Cys-643, and Glu-665 together coordinate Zn(2+). Catalysis depends on His-694, which acts as the Proton donor. Cys-726 serves as a coordination point for Zn(2+).

It belongs to the vitamin-B12 independent methionine synthase family. Requires Zn(2+) as cofactor.

The enzyme catalyses 5-methyltetrahydropteroyltri-L-glutamate + L-homocysteine = tetrahydropteroyltri-L-glutamate + L-methionine. It functions in the pathway amino-acid biosynthesis; L-methionine biosynthesis via de novo pathway; L-methionine from L-homocysteine (MetE route): step 1/1. Functionally, catalyzes the transfer of a methyl group from 5-methyltetrahydrofolate to homocysteine resulting in methionine formation. This Escherichia coli O6:H1 (strain CFT073 / ATCC 700928 / UPEC) protein is 5-methyltetrahydropteroyltriglutamate--homocysteine methyltransferase.